The sequence spans 416 residues: Splicing factor U2AF 50 kDa subunit (416 aa).

Basic and acidic residues predominate over residues 1 to 10 (MGYDDRERDR). The disordered stretch occupies residues 1-47 (MGYDDRERDRERRRHRSRSRDRHRERSRDRRHHRNSRRKPSLYWDVP). Basic residues-rich tracts occupy residues 11 to 21 (ERRRHRSRSRD) and 29 to 40 (DRRHHRNSRRKP). RRM domains lie at 93-175 (RRLY…RPHD), 207-285 (HKIF…RASV), and 318-408 (EVLC…YFDP).

This sequence belongs to the splicing factor SR family. Forms a heterodimer with the U2AF small subunit.

The protein resides in the nucleus. In terms of biological role, necessary for the splicing of pre-mRNA. Binds to the polypyrimidine tract of introns early during spliceosome assembly. This Drosophila melanogaster (Fruit fly) protein is Splicing factor U2AF 50 kDa subunit (U2af50).